Reading from the N-terminus, the 809-residue chain is Leucine--tRNA ligase (809 aa).

A 'HIGH' region motif is present at residues 40–51; that stretch reads PYPSGQGLHVGH. A 'KMSKS' region motif is present at residues 581 to 585; that stretch reads KMSKS. Position 584 (Lys584) interacts with ATP.

Belongs to the class-I aminoacyl-tRNA synthetase family.

It localises to the cytoplasm. The catalysed reaction is tRNA(Leu) + L-leucine + ATP = L-leucyl-tRNA(Leu) + AMP + diphosphate. This chain is Leucine--tRNA ligase, found in Levilactobacillus brevis (strain ATCC 367 / BCRC 12310 / CIP 105137 / JCM 1170 / LMG 11437 / NCIMB 947 / NCTC 947) (Lactobacillus brevis).